A 130-amino-acid polypeptide reads, in one-letter code: MAVVNFYGTGRRKEAVARVFVVPGEGNITINGKSLEEYFPRKTLQIIVKQPLELTNTVGKFDVKAKVHGGGISGQAGAVRLGIARALVQADPSLRPVLKKAGFLTRDPRMVERKKYGLRKSRRRPQWTKR.

This sequence belongs to the universal ribosomal protein uS9 family.

The chain is Small ribosomal subunit protein uS9 from Carboxydothermus hydrogenoformans (strain ATCC BAA-161 / DSM 6008 / Z-2901).